Here is an 828-residue protein sequence, read N- to C-terminus: Periplasmic nitrate reductase (828 aa).

Positions 1 to 31 form a signal peptide, tat-type signal; it reads MKLSRRSFMKANAVAAAAAAAGLSVPGVARA. A 4Fe-4S Mo/W bis-MGD-type domain is found at 39-95; it reads IKWDKAPCRFCGTGCGVLVGTQQGRVVACQGDPDAPVNRGLNCIKGYFLPKIMYGKD. [4Fe-4S] cluster is bound by residues Cys-46, Cys-49, Cys-53, and Cys-81. Mo-bis(molybdopterin guanine dinucleotide) contacts are provided by residues Lys-83, Gln-150, Asn-175, Cys-179, 212–219, 243–247, 262–264, Met-372, Gln-376, Asn-482, 508–509, Lys-531, Asp-558, and 718–727; these read WGSNMAEM, STFQH, QSD, SD, and TGRVLEHWHT. Phe-794 lines the substrate pocket. Mo-bis(molybdopterin guanine dinucleotide) is bound by residues Asn-802 and Lys-819.

The protein belongs to the prokaryotic molybdopterin-containing oxidoreductase family. NasA/NapA/NarB subfamily. Component of the periplasmic nitrate reductase NapAB complex composed of NapA and NapB. Requires [4Fe-4S] cluster as cofactor. It depends on Mo-bis(molybdopterin guanine dinucleotide) as a cofactor. Predicted to be exported by the Tat system. The position of the signal peptide cleavage has not been experimentally proven.

It is found in the periplasm. It carries out the reaction 2 Fe(II)-[cytochrome] + nitrate + 2 H(+) = 2 Fe(III)-[cytochrome] + nitrite + H2O. Catalytic subunit of the periplasmic nitrate reductase complex NapAB. Receives electrons from NapB and catalyzes the reduction of nitrate to nitrite. The chain is Periplasmic nitrate reductase from Salmonella schwarzengrund (strain CVM19633).